The sequence spans 175 residues: Sec-independent protein translocase protein TatB (175 aa).

The chain crosses the membrane as a helical span at residues Met1–Gly21. Disordered regions lie at residues Val96–Gly115 and Val153–Leu175. Over residues Val160–Leu175 the composition is skewed to basic residues.

It belongs to the TatB family. The Tat system comprises two distinct complexes: a TatABC complex, containing multiple copies of TatA, TatB and TatC subunits, and a separate TatA complex, containing only TatA subunits. Substrates initially bind to the TatABC complex, which probably triggers association of the separate TatA complex to form the active translocon.

It is found in the cell inner membrane. Part of the twin-arginine translocation (Tat) system that transports large folded proteins containing a characteristic twin-arginine motif in their signal peptide across membranes. Together with TatC, TatB is part of a receptor directly interacting with Tat signal peptides. TatB may form an oligomeric binding site that transiently accommodates folded Tat precursor proteins before their translocation. The chain is Sec-independent protein translocase protein TatB from Burkholderia mallei (strain ATCC 23344).